The chain runs to 301 residues: N-acetylmuramic acid 6-phosphate etherase (301 aa).

Residues 57–220 enclose the SIS domain; it reads ITEAFKKGGR…TTGAMIRSGK (164 aa). Glu85 acts as the Proton donor in catalysis. Residue Glu116 is part of the active site.

It belongs to the GCKR-like family. MurNAc-6-P etherase subfamily. As to quaternary structure, homodimer.

The enzyme catalyses N-acetyl-D-muramate 6-phosphate + H2O = N-acetyl-D-glucosamine 6-phosphate + (R)-lactate. The protein operates within amino-sugar metabolism; 1,6-anhydro-N-acetylmuramate degradation. Its pathway is amino-sugar metabolism; N-acetylmuramate degradation. It functions in the pathway cell wall biogenesis; peptidoglycan recycling. Functionally, specifically catalyzes the cleavage of the D-lactyl ether substituent of MurNAc 6-phosphate, producing GlcNAc 6-phosphate and D-lactate. Together with AnmK, is also required for the utilization of anhydro-N-acetylmuramic acid (anhMurNAc) either imported from the medium or derived from its own cell wall murein, and thus plays a role in cell wall recycling. The sequence is that of N-acetylmuramic acid 6-phosphate etherase from Photobacterium profundum (strain SS9).